A 269-amino-acid polypeptide reads, in one-letter code: Iron(3+)-hydroxamate import ATP-binding protein FhuC (269 aa).

The 237-residue stretch at 4-240 (LSTEQLGIGY…DILKQVFQID (237 aa)) folds into the ABC transporter domain. ATP is bound by residues 36–43 (GPNGCGKS) and 160–171 (LLLLDEPTTYLD).

This sequence belongs to the ABC transporter superfamily. Iron (Fe3+)-hydroxamate importer (TC 3.A.1.14.7) family. The complex is composed of an ATP-binding protein (FhuC), two transmembrane proteins (FhuB and FhuG) and a solute-binding protein (FhuD or YxeB).

The protein localises to the cell membrane. The enzyme catalyses ATP + H2O + Fe(3+)-hydroxamate complex-[hydroxamate-binding protein]Side 1 = ADP + phosphate + Fe(3+)-hydroxamate complexSide 2 + [hydroxamate-binding protein]Side 1.. In terms of biological role, part of the ABC transporter complex FhuBGCD involved in iron(3+)-hydroxamate import. Responsible for energy coupling to the transport system. This chain is Iron(3+)-hydroxamate import ATP-binding protein FhuC (fhuC), found in Bacillus subtilis (strain 168).